Reading from the N-terminus, the 348-residue chain is Selenide, water dikinase (348 aa).

C17 is an active-site residue. ATP contacts are provided by residues K20 and 48-50; that span reads TRD. D51 provides a ligand contact to Mg(2+). Residues D68, D91, and 139 to 141 contribute to the ATP site; that span reads GHS. D91 contributes to the Mg(2+) binding site. D227 serves as a coordination point for Mg(2+).

It belongs to the selenophosphate synthase 1 family. Class I subfamily. In terms of assembly, homodimer. It depends on Mg(2+) as a cofactor.

The catalysed reaction is hydrogenselenide + ATP + H2O = selenophosphate + AMP + phosphate + 2 H(+). In terms of biological role, synthesizes selenophosphate from selenide and ATP. In Yersinia pseudotuberculosis serotype I (strain IP32953), this protein is Selenide, water dikinase.